We begin with the raw amino-acid sequence, 344 residues long: UDP-glucose 4-epimerase (344 aa).

Residues 15-17 (GYI), 36-40 (DNLSN), 63-64 (DI), phenylalanine 85, and lysine 89 contribute to the NAD(+) site. 129-131 (SAT) provides a ligand contact to substrate. The active-site Proton acceptor is tyrosine 153. The NAD(+) site is built by lysine 157 and tyrosine 181. Substrate is bound by residues 181–183 (YFN), 202–204 (NNL), 220–222 (SIF), arginine 235, and 297–300 (RKGD).

It belongs to the NAD(P)-dependent epimerase/dehydratase family. In terms of assembly, homodimer. It depends on NAD(+) as a cofactor.

It catalyses the reaction UDP-alpha-D-glucose = UDP-alpha-D-galactose. The catalysed reaction is UDP-N-acetyl-alpha-D-glucosamine = UDP-N-acetyl-alpha-D-galactosamine. It participates in carbohydrate metabolism; galactose metabolism. Functionally, catalyzes two distinct but analogous reactions: the reversible epimerization of UDP-glucose to UDP-galactose and the reversible epimerization of UDP-N-acetylglucosamine to UDP-N-acetylgalactosamine. The reaction with UDP-Gal plays a critical role in the Leloir pathway of galactose catabolism in which galactose is converted to the glycolytic intermediate glucose 6-phosphate. It contributes to the catabolism of dietary galactose and enables the endogenous biosynthesis of both UDP-Gal and UDP-GalNAc when exogenous sources are limited. Both UDP-sugar interconversions are important in the synthesis of glycoproteins and glycolipids. This Dictyostelium discoideum (Social amoeba) protein is UDP-glucose 4-epimerase (galE).